A 93-amino-acid chain; its full sequence is Ribonuclease P protein component 4 (93 aa).

Zn(2+) is bound by residues Cys-55, Cys-58, Cys-81, and Cys-83.

The protein belongs to the eukaryotic/archaeal RNase P protein component 4 family. Consists of a catalytic RNA component and at least 4-5 protein subunits. The cofactor is Zn(2+).

The protein resides in the cytoplasm. It catalyses the reaction Endonucleolytic cleavage of RNA, removing 5'-extranucleotides from tRNA precursor.. Functionally, part of ribonuclease P, a protein complex that generates mature tRNA molecules by cleaving their 5'-ends. This chain is Ribonuclease P protein component 4, found in Halobacterium salinarum (strain ATCC 29341 / DSM 671 / R1).